A 477-amino-acid chain; its full sequence is 3-isopropylmalate dehydratase large subunit 1 (477 aa).

Residues C357, C417, and C420 each coordinate [4Fe-4S] cluster.

This sequence belongs to the aconitase/IPM isomerase family. LeuC type 1 subfamily. Heterodimer of LeuC and LeuD. [4Fe-4S] cluster serves as cofactor.

It carries out the reaction (2R,3S)-3-isopropylmalate = (2S)-2-isopropylmalate. Its pathway is amino-acid biosynthesis; L-leucine biosynthesis; L-leucine from 3-methyl-2-oxobutanoate: step 2/4. Catalyzes the isomerization between 2-isopropylmalate and 3-isopropylmalate, via the formation of 2-isopropylmaleate. The sequence is that of 3-isopropylmalate dehydratase large subunit 1 from Bradyrhizobium diazoefficiens (strain JCM 10833 / BCRC 13528 / IAM 13628 / NBRC 14792 / USDA 110).